A 1252-amino-acid chain; its full sequence is Guanine nucleotide exchange factor SDC25 (1252 aa).

One can recognise an SH3 domain in the interval 26-97; it reads QPIDVVECTY…PPSFTRSILN (72 aa). 2 disordered regions span residues 409–454 and 623–648; these read IPAS…DTIW and LNLD…DEYE. The span at 416 to 428 shows a compositional bias: low complexity; it reads TSCSSETSHHSPS. The N-terminal Ras-GEF domain occupies 782 to 914; sequence SNNRIKGGSK…LLKEVNQKFK (133 aa). A Ras-GEF domain is found at 952 to 1199; that stretch reads DPVLFATQLT…YQLSLIIEPK (248 aa). The disordered stretch occupies residues 1201–1252; that stretch reads RKKVVPNSNSNNKSQEKSRDDQTDEGKTSTKKDRFSKFQLHKTKKKAPKVSK. The segment covering 1214 to 1236 has biased composition (basic and acidic residues); the sequence is SQEKSRDDQTDEGKTSTKKDRFS. Over residues 1239–1252 the composition is skewed to basic residues; that stretch reads QLHKTKKKAPKVSK.

In terms of biological role, promotes the exchange of Ras-bound GDP by GTP. This Saccharomyces cerevisiae (strain RM11-1a) (Baker's yeast) protein is Guanine nucleotide exchange factor SDC25 (SDC25).